Consider the following 497-residue polypeptide: Angiopoietin-1 (497 aa).

An N-terminal signal peptide occupies residues 1-19 (MTVFLSFAFFAAILTHIGC). Positions 81–119 (QKLQHLEHVMENYTQWLQKLENYIVENMKSEMAQIQQNA) form a coiled coil. N-linked (GlcNAc...) asparagine glycosylation is found at asparagine 92, asparagine 122, asparagine 154, asparagine 243, and asparagine 294. Residues 153–261 (LNQTSRLEIQ…LELMDTVHNL (109 aa)) are a coiled coil. The 221-residue stretch at 276–496 (REEEKPFRDC…STTMMIRPLD (221 aa)) folds into the Fibrinogen C-terminal domain. 2 disulfides stabilise this stretch: cysteine 285–cysteine 314 and cysteine 438–cysteine 451.

Homooligomer. Interacts with TEK/TIE2. Interacts with SVEP1/polydom. Interacts with THBD; this interaction significantly inhibits the generation of activated PC and TAFIa/CPB2 by the thrombin/thrombomodulin complex.

It localises to the secreted. Functionally, binds and activates TIE2 receptor by inducing its tyrosine phosphorylation. Implicated in endothelial developmental processes later and distinct from that of VEGF. Appears to play a crucial role in mediating reciprocal interactions between the endothelium and surrounding matrix and mesenchyme. Mediates blood vessel maturation/stability. It may play an important role in the heart early development. This Rattus norvegicus (Rat) protein is Angiopoietin-1 (Angpt1).